A 1777-amino-acid polypeptide reads, in one-letter code: Fatty acid synthase subunit alpha (1777 aa).

The tract at residues 101 to 124 (APVESADNEPAQPAASSTPAAPAP) is disordered. Residues 110–120 (PAQPAASSTPA) show a composition bias toward low complexity. The region spanning 151–237 (LSAIDVVISI…KVMGGHIDRL (87 aa)) is the Carrier domain. Ser-186 is subject to O-(pantetheine 4'-phosphoryl)serine. Positions 563 to 803 (FTGRRVLVTG…ILSLLSGDIL (241 aa)) are ketoreductase (KR) domain. The Ketosynthase family 3 (KS3) domain occupies 1007–1539 (KEIMHEVVID…QKGGLVVGIA (533 aa)). Active-site for beta-ketoacyl synthase activity residues include Cys-1193, His-1424, and His-1465. A Mg(2+)-binding site is contributed by Asp-1661. Residues 1661 to 1663 (DIE), 1706 to 1716 (EAIFKSLQIPS), 1730 to 1734 (SNGAQ), and 1760 to 1762 (ITH) contribute to the acetyl-CoA site.

Belongs to the thiolase-like superfamily. Fungal fatty acid synthetase subunit alpha family. Fatty acid synthase is composed of alpha and beta subunits.

The catalysed reaction is acetyl-CoA + n malonyl-CoA + 2n NADPH + 4n H(+) = a long-chain-acyl-CoA + n CoA + n CO2 + 2n NADP(+).. The enzyme catalyses a fatty acyl-[ACP] + malonyl-[ACP] + H(+) = a 3-oxoacyl-[ACP] + holo-[ACP] + CO2. It carries out the reaction a (3R)-hydroxyacyl-[ACP] + NADP(+) = a 3-oxoacyl-[ACP] + NADPH + H(+). It functions in the pathway secondary metabolite biosynthesis. Functionally, fatty acid synthase alpha subunit; part of the gene cluster that mediates the biosynthesis of oryzines, natural products with an unusual maleidride backbone. The two subunits of the fungal fatty acid synthase oryfasA and oryfasB probably form octenoic acid. This fatty acid is most likely activated by the acyl-CoA ligase oryP to give octenyl-CoA before the citrate synthase-like protein oryE catalyzes condensation with oxaloacetate to form tricarboxylic acid. The next steps of the pathways are conjectural, but a favorite possible route has been proposed, beginning with decarboxylation and concomitant dehydration by the decarboxylase oryM, followed by tautomerization, which may lead to the production of a diene intermediate. Reduction of this diene intermediate could give the known metabolite piliformic acid. On the pathway to oryzine B and oryzine A, however, hydroxylation of the diene by the alpha-ketoglutarate-dependent dioxygenase oryG and lactonisation by the lactonohydrolases oryH or oryL could give oryzine B directly. Finally, enoyl reduction by the dehydrogenase oryD would then convert oryzine B into oryzine A. This Aspergillus oryzae (strain ATCC 42149 / RIB 40) (Yellow koji mold) protein is Fatty acid synthase subunit alpha.